We begin with the raw amino-acid sequence, 57 residues long: Beta-defensin 3 (57 aa).

Residue glutamine 16 is modified to Pyrrolidone carboxylic acid. 3 disulfide bridges follow: cysteine 24–cysteine 53, cysteine 31–cysteine 46, and cysteine 36–cysteine 54.

It belongs to the beta-defensin family. In terms of tissue distribution, neutrophilic granules.

The protein localises to the secreted. Its function is as follows. Has bactericidal activity. Active against E.coli ML35 and S.aureus 502A. The chain is Beta-defensin 3 (DEFB3) from Bos taurus (Bovine).